We begin with the raw amino-acid sequence, 419 residues long: L-rhamnose isomerase (419 aa).

Positions 262, 294, and 296 each coordinate Mn(2+).

It belongs to the rhamnose isomerase family. Homotetramer. Mn(2+) is required as a cofactor.

The protein resides in the cytoplasm. The enzyme catalyses L-rhamnopyranose = L-rhamnulose. The protein operates within carbohydrate degradation; L-rhamnose degradation; glycerone phosphate from L-rhamnose: step 1/3. In terms of biological role, catalyzes the interconversion of L-rhamnose and L-rhamnulose. The chain is L-rhamnose isomerase from Salmonella agona (strain SL483).